A 215-amino-acid chain; its full sequence is 3-demethoxyubiquinol 3-hydroxylase (215 aa).

Fe cation-binding residues include Glu-64, Glu-94, His-97, Glu-146, Glu-178, and His-181.

This sequence belongs to the COQ7 family. Requires Fe cation as cofactor.

The protein resides in the cell membrane. The enzyme catalyses a 5-methoxy-2-methyl-3-(all-trans-polyprenyl)benzene-1,4-diol + AH2 + O2 = a 3-demethylubiquinol + A + H2O. It participates in cofactor biosynthesis; ubiquinone biosynthesis. Its function is as follows. Catalyzes the hydroxylation of 2-nonaprenyl-3-methyl-6-methoxy-1,4-benzoquinol during ubiquinone biosynthesis. The sequence is that of 3-demethoxyubiquinol 3-hydroxylase from Coxiella burnetii (strain CbuG_Q212) (Coxiella burnetii (strain Q212)).